The primary structure comprises 625 residues: Somatic embryogenesis receptor kinase 1 (625 aa).

Positions 1–26 (MESSYVVFILLSLILLPNHSLWLASA) are cleaved as a signal peptide. Residues 27–238 (NLEGDALHTL…STPSGYGITG (212 aa)) are Extracellular-facing. A disulfide bond links Cys58 and Cys65. Leucine-rich repeat receptor-like protein kinase binding regions lie at residues 59–78 (TWFHVTCNNENSVIRVDLGN) and 97–102 (YLELYS). 61-62 (FH) contacts brassinolide. LRR repeat units lie at residues 92–116 (LKNLQYLELYSNNITGPIPSNLGNL), 118–140 (NLVSLDLYLNSFSGPIPESLGKL), 141–164 (SKLRFLRLNNNSLTGSIPMSLTNI), and 165–189 (TTLQVLDLSNNRLSGSVPDNGSFSL). Residues Asn104 and Asn115 are each glycosylated (N-linked (GlcNAc...) asparagine). 2 leucine-rich repeat receptor-like protein kinase binding regions span residues 123–126 (DLYL) and 145–147 (FLR). Residues Asn150, Asn163, and Asn184 are each glycosylated (N-linked (GlcNAc...) asparagine). The leucine-rich repeat receptor-like protein kinase binding stretch occupies residues 171–194 (DLSNNRLSGSVPDNGSFSLFTPIS). A disulfide bridge connects residues Cys202 and Cys210. The chain crosses the membrane as a helical span at residues 239 to 259 (AIAGGVAAGAALLFAAPAIAF). Over 260 to 625 (AWWRRRKPLD…LHAVELSGPR (366 aa)) the chain is Cytoplasmic. Residues Ser291, Ser299, and Ser303 each carry the phosphoserine modification. The 288-residue stretch at 302-589 (FSNKNILGRG…GLAEKWDEWQ (288 aa)) folds into the Protein kinase domain. Position 308–316 (308–316 (LGRGGFGKV)) interacts with ATP. Position 325 is a phosphothreonine (Thr325). Lys330 is an ATP binding site. 2 positions are modified to phosphothreonine: Thr337 and Thr346. Phosphoserine occurs at positions 352, 383, 386, and 394. A Phosphothreonine modification is found at Thr402. At Ser415 the chain carries Phosphoserine. Asp429 serves as the catalytic Proton acceptor. Residue Tyr456 is modified to Phosphotyrosine. Phosphothreonine occurs at positions 459, 462, 463, and 468. At Tyr476 the chain carries Phosphotyrosine. A Phosphoserine modification is found at Ser478. Thr479 is subject to Phosphothreonine. Phosphoserine is present on Ser483. Residue Thr541 is modified to Phosphothreonine. Tyr543 carries the phosphotyrosine modification. At Thr559 the chain carries Phosphothreonine. Residues Ser606 and Ser612 each carry the phosphoserine modification. Residue Thr613 is modified to Phosphothreonine. Phosphotyrosine is present on Tyr614. The residue at position 622 (Ser622) is a Phosphoserine.

It belongs to the protein kinase superfamily. Ser/Thr protein kinase family. In terms of assembly, monomer, homo- and heterodimer. Interacts with KAPP, CDC48A, GRF6 or GRF7, SERK2, BRI1 and SERK3/BAK1 to form the SERK1 signaling complex. Bind to BRI1 in a brassinolide-dependent manner. Heterodimer with PSKR1. Interacts with the EF-Tu receptor EFR and FLS2 in a specific ligand-induced manner. Interacts with ERECTA in a EPF2-induced manner. Interacts with ERL1 in a EPF1-induced manner. Interacts with TMM. In the presence of the signal peptide RGF1, interacts with RGI1/RGFR4/RCH2, RGI2/RGFR3/RCH1, RGI3/RGFR1, RGI4/RGFR2/SKM2 and RGI5/RGFR5. Mg(2+) serves as cofactor. Post-translationally, glycosylated. Important for targeting to the plasma membrane. Intermolecular autophosphorylation. The catalytic activity of SERK1 depends on the presence of a phosphorylated Thr residue in SERK1. The phosphorylation is induced by brassinosteroids. Transphosphorylation by BRI1 occurs only on Ser-299 and Thr-462. Dephosphorylation of threonine residues by the kinase-associated protein phosphatase (KAPP) is involved in SERK1 endocytosis. Expressed in flowers, tapetum, developing microspores, all cells of the embryo sac, provascular strands and developing vascular bundles. Low expression in adult vascular tissue. Detected in root meristem.

Its subcellular location is the cell membrane. It localises to the endoplasmic reticulum membrane. The enzyme catalyses L-seryl-[protein] + ATP = O-phospho-L-seryl-[protein] + ADP + H(+). It carries out the reaction L-threonyl-[protein] + ATP = O-phospho-L-threonyl-[protein] + ADP + H(+). The catalysed reaction is L-tyrosyl-[protein] + ATP = O-phospho-L-tyrosyl-[protein] + ADP + H(+). With respect to regulation, inhibited by manganese. Its function is as follows. Dual specificity kinase acting on both serine/threonine- and tyrosine-containing substrates. Phosphorylates BRI1 on 'Ser-887' and CDC48 on at least one threonine residue and on 'Ser-41'. Confers embryogenic competence. Acts redundantly with SERK2 as a control point for sporophytic development controlling male gametophyte production. Involved in the brassinolide signaling pathway. Probably required during small peptide (e.g. RGF1) signaling. Involved in the perception of phytosulfokine and subsequent signal transduction. Acts as a RLK5 coreceptor and promotes high-affinity IDA sensing, thus being a positive regulator of floral abscission. This chain is Somatic embryogenesis receptor kinase 1, found in Arabidopsis thaliana (Mouse-ear cress).